We begin with the raw amino-acid sequence, 273 residues long: MEILPILSDSYTLGFIGAGKMAESIAKGASRSGVLPSSRIVTAHSNPSRRAAFESIGITVLSSNDDVVRASNVVVFSVKPQLVKDVVLKLKPLLTKDKLLVSVAAGIKLKDLQEWAGHERFIRVMPNTPAAVGQAASVMSLGGAATEEDANLISQLFGSIGKIWKADDKFFDAITGLSGSGPAYIYLAIEALADGGVAAGLPRDLALSLASQTVLGAASMATLSGKHPGQLKDDVTSPGGTTIAGVHELEKGGFRGTLMNAVVAAAKRSRELS.

The protein belongs to the pyrroline-5-carboxylate reductase family.

It is found in the cytoplasm. The enzyme catalyses L-proline + NADP(+) = (S)-1-pyrroline-5-carboxylate + NADPH + 2 H(+). It catalyses the reaction L-proline + NAD(+) = (S)-1-pyrroline-5-carboxylate + NADH + 2 H(+). It functions in the pathway amino-acid biosynthesis; L-proline biosynthesis; L-proline from L-glutamate 5-semialdehyde: step 1/1. The sequence is that of Pyrroline-5-carboxylate reductase (PROC) from Pisum sativum (Garden pea).